Here is a 484-residue protein sequence, read N- to C-terminus: ATP synthase subunit beta (484 aa).

162–169 is an ATP binding site; sequence GGAGVGKT.

Belongs to the ATPase alpha/beta chains family. In terms of assembly, F-type ATPases have 2 components, CF(1) - the catalytic core - and CF(0) - the membrane proton channel. CF(1) has five subunits: alpha(3), beta(3), gamma(1), delta(1), epsilon(1). CF(0) has four main subunits: a(1), b(1), b'(1) and c(9-12).

It localises to the cellular thylakoid membrane. The enzyme catalyses ATP + H2O + 4 H(+)(in) = ADP + phosphate + 5 H(+)(out). Functionally, produces ATP from ADP in the presence of a proton gradient across the membrane. The catalytic sites are hosted primarily by the beta subunits. The chain is ATP synthase subunit beta from Trichodesmium erythraeum (strain IMS101).